A 402-amino-acid polypeptide reads, in one-letter code: Tryptophan synthase beta chain (402 aa).

Residue Lys88 is modified to N6-(pyridoxal phosphate)lysine.

This sequence belongs to the TrpB family. Tetramer of two alpha and two beta chains. Pyridoxal 5'-phosphate is required as a cofactor.

It carries out the reaction (1S,2R)-1-C-(indol-3-yl)glycerol 3-phosphate + L-serine = D-glyceraldehyde 3-phosphate + L-tryptophan + H2O. It participates in amino-acid biosynthesis; L-tryptophan biosynthesis; L-tryptophan from chorismate: step 5/5. Its function is as follows. The beta subunit is responsible for the synthesis of L-tryptophan from indole and L-serine. This is Tryptophan synthase beta chain (trpB) from Pasteurella multocida (strain Pm70).